The sequence spans 173 residues: Probable chemoreceptor glutamine deamidase CheD 2 (173 aa).

This sequence belongs to the CheD family.

It catalyses the reaction L-glutaminyl-[protein] + H2O = L-glutamyl-[protein] + NH4(+). Functionally, probably deamidates glutamine residues to glutamate on methyl-accepting chemotaxis receptors (MCPs), playing an important role in chemotaxis. The protein is Probable chemoreceptor glutamine deamidase CheD 2 of Albidiferax ferrireducens (strain ATCC BAA-621 / DSM 15236 / T118) (Rhodoferax ferrireducens).